Consider the following 240-residue polypeptide: Peptidyl-tRNA hydrolase 2 (240 aa).

Tyr60 contributes to the tRNA binding site. His65 acts as the Proton acceptor in catalysis. Residues Tyr111, Asn113, and Asn159 each coordinate tRNA.

Belongs to the PTH family. As to quaternary structure, monomer.

The protein localises to the cytoplasm. It carries out the reaction an N-acyl-L-alpha-aminoacyl-tRNA + H2O = an N-acyl-L-amino acid + a tRNA + H(+). In terms of biological role, hydrolyzes ribosome-free peptidyl-tRNAs (with 1 or more amino acids incorporated), which drop off the ribosome during protein synthesis, or as a result of ribosome stalling. Functionally, catalyzes the release of premature peptidyl moieties from peptidyl-tRNA molecules trapped in stalled 50S ribosomal subunits, and thus maintains levels of free tRNAs and 50S ribosomes. The chain is Peptidyl-tRNA hydrolase 2 from Corynebacterium jeikeium (strain K411).